Consider the following 232-residue polypeptide: MSATKMNAQEIIKFIADAKKKTPVKVTFNGELHGTIPWSVVKLGNVLFGDWEEIKPLLVNLEENKTYVVEQDARNSAVPLLDKRDINARIEPGAIIRDQVEIGDNAVIMMGAVINIGAEIGAGTMIDMGAILGGRAIVGKNSHVGAGAVLAGVIEPASAEPVRVGDNVLIGANAVVIEGVQIGSGSVVAAGAIVTQDVPENVVVAGVPARIIKTIDEKTQQKTALEDALRTL.

Belongs to the transferase hexapeptide repeat family. DapH subfamily.

It carries out the reaction (S)-2,3,4,5-tetrahydrodipicolinate + acetyl-CoA + H2O = L-2-acetamido-6-oxoheptanedioate + CoA. It functions in the pathway amino-acid biosynthesis; L-lysine biosynthesis via DAP pathway; LL-2,6-diaminopimelate from (S)-tetrahydrodipicolinate (acetylase route): step 1/3. Its function is as follows. Catalyzes the transfer of an acetyl group from acetyl-CoA to tetrahydrodipicolinate. The protein is 2,3,4,5-tetrahydropyridine-2,6-dicarboxylate N-acetyltransferase of Streptococcus gordonii (strain Challis / ATCC 35105 / BCRC 15272 / CH1 / DL1 / V288).